An 86-amino-acid chain; its full sequence is Photosystem I reaction center subunit PsaK 1 (86 aa).

Residues 1–8 constitute a propeptide that is removed on maturation; sequence MLTSTLLA. The next 2 membrane-spanning stretches (helical) occupy residues 14 to 34 and 60 to 80; these read LEWSPTVGIIMVIANVIAITF and PALLATTAFGHILGVGLVLGL.

Belongs to the PsaG/PsaK family. As to quaternary structure, the cyanobacterial PSI reaction center is composed of one copy each of PsaA,B,C,D,E,F,I,J,K,L,M and X, and forms dimeric and tetrameric complexes.

It is found in the cellular thylakoid membrane. The polypeptide is Photosystem I reaction center subunit PsaK 1 (psaK1) (Nostoc sp. (strain PCC 7120 / SAG 25.82 / UTEX 2576)).